Consider the following 109-residue polypeptide: Con-Ins K2 (109 aa).

An N-terminal signal peptide occupies residues 1–24; it reads MTTSSYFLLVALGLLLYVCQSSFG. A propeptide spanning residues 25–29 is cleaved from the precursor; it reads NPHTR. Disulfide bonds link C41/C90, C53/C103, and C89/C94. 4-carboxyglutamate is present on E44. Positions 57–83 are cleaved as a propeptide — c peptide; sequence RKRRGFPSMLKARAKRNEAFLLQRDGR.

It belongs to the insulin family. As to quaternary structure, heterodimer of A and B chains; disulfide-linked. As to expression, expressed by the venom gland.

Its subcellular location is the secreted. This venom insulin, from a fish-hunting cone snail, facilitates prey capture by rapidly inducing hypoglycemic shock. It is one of the smallest known insulin found in nature and lacks the C-terminal segment of the B chain that, in human insulin, mediates engagement of the insulin receptor (INSR) and assembly of the hormone's hexameric storage form. Despite lacking this segment, it both binds and activates human insulin receptor (long isoform (HIR-B)) with a moderate potency (EC(50)=373.2 nM). In vivo, intraperitoneal injection of this peptide into zebrafish lowers blood glucose with a lower potency than human insulin. In addition, when applied to water, this peptide reduces overall locomotor activity of zebrafish larvae, observed as a significant decrease in the percentage of time spent swimming and movement frequency. When tested on a mouse model of diabetes, this insulin also lowers blood glucose with a 20-fold lower potency than human insulin. This Conus kinoshitai (Kinoshita's cone) protein is Con-Ins K2.